The sequence spans 1255 residues: TBC1 domain family member 1 (1255 aa).

At serine 146 the chain carries Phosphoserine. Positions 208–228 (RTDWEAPTGQPSAPGPRPMRK) are disordered. A Phosphoserine; by PKB/AKT1 modification is found at serine 229. A Phosphoserine; by AMPK modification is found at serine 231. Residues 238-398 (LAFRKEFQDA…LHKLCERIEG (161 aa)) enclose the PID domain. Residue serine 489 is modified to Phosphoserine; by PKB/AKT1. Phosphoserine is present on serine 497. The residue at position 499 (threonine 499) is a Phosphothreonine; by PKB/AKT1. 8 positions are modified to phosphoserine: serine 501, serine 519, serine 521, serine 559, serine 560, serine 564, serine 565, and serine 579. Disordered regions lie at residues 509–544 (GNKA…MGDK) and 559–581 (SSDD…LSPQ). Low complexity predominate over residues 519–539 (SASVDLDSSTSSTLSNTSKEL). Position 590 is a phosphothreonine (threonine 590). 2 disordered regions span residues 595-614 (PVEC…VSQR) and 621-681 (SVST…GNAV). Position 608 is a phosphoserine (serine 608). Residue serine 621 is modified to Phosphoserine; by PKB/AKT1. Phosphoserine occurs at positions 660 and 661. Residues 670–679 (HNSSGEQSGN) show a composition bias toward polar residues. A Phosphoserine; by PKB/AKT1 modification is found at serine 697. A phosphoserine mark is found at serine 698 and serine 699. Residue serine 700 is modified to Phosphoserine; by AMPK. Residues 764–786 (DSPSRYEDYSELGELPPRSPLEP) form a disordered region. Phosphoserine is present on residues serine 782 and serine 1028. In terms of domain architecture, Rab-GAP TBC spans 887–1081 (GVPRHHRGEI…RVFDMIFLQG (195 aa)). Tyrosine 1039 carries the post-translational modification Phosphotyrosine. Threonine 1218 carries the post-translational modification Phosphothreonine. Positions 1233–1255 (LRRQSARPSTPEPDCTQLEPTGD) are disordered.

As to quaternary structure, interacts with APPL2 (via BAR domain); interaction is dependent of TBC1D1 phosphorylation at Ser-229; interaction diminishes the phosphorylation of TBC1D1 at Thr-590, resulting in inhibition of SLC2A4/GLUT4 translocation and glucose uptake. Insulin-stimulated phosphorylation by AKT family kinases stimulates SLC2A4/GLUT4 translocation. Expressed in highest levels in hematopoietic cells, testis and kidney.

The protein resides in the nucleus. May act as a GTPase-activating protein for Rab family protein(s). May play a role in the cell cycle and differentiation of various tissues. Involved in the trafficking and translocation of GLUT4-containing vesicles and insulin-stimulated glucose uptake into cells. The chain is TBC1 domain family member 1 (Tbc1d1) from Mus musculus (Mouse).